The chain runs to 201 residues: E3 ubiquitin-protein ligase MIR1 (201 aa).

The RING-CH-type zinc finger occupies 1–58 (MDSTGEFCWICHQPEGPLKRFCGCKGSCAVSHQDCLRGWLETSRRQTCALCGTPYSMK). Residues 1–81 (MDSTGEFCWI…EEVLAAMEAC (81 aa)) lie on the Cytoplasmic side of the membrane. Zn(2+) is bound by residues Cys-8, Cys-11, Cys-22, Cys-24, His-32, Cys-35, Cys-48, and Cys-51. Residues 52 to 79 (GTPYSMKWKTKPLREWTWGEEEVLAAME) are DIRT. A helical transmembrane segment spans residues 82–102 (LPLVLIPLAVLMIVMGTWLLV). Residues 103–113 (NHNGFLSPRMQ) are Extracellular-facing. Residues 114-134 (VVLVVIVLLAMIVFSASASYV) form a helical membrane-spanning segment. At 135-201 (MVEGPGCLDT…RLGCVRLCCV (67 aa)) the chain is on the cytoplasmic side.

In terms of assembly, interacts with host UBE2J2.

Its subcellular location is the host endoplasmic reticulum membrane. The enzyme catalyses [E2 ubiquitin-conjugating enzyme]-S-ubiquitinyl-L-cysteine + [acceptor protein]-L-cysteine = [E2 ubiquitin-conjugating enzyme]-L-cysteine + [acceptor protein]-S-ubiquitinyl-L-cysteine.. Its pathway is protein modification; protein ubiquitination. E3 ubiquitin-protein ligase that mediates ubiquitination of host surface class I (MHC-I) H-2D(b)/H2-D1 and H-2K(b)/H2-K1 molecules before they exit the endoplasmic reticulum, leading to their degradation by the endoplasmic reticulum-associated degradation (ERAD) system, thus blocking the immune detection of virus-infected cells. Mediates ubiquitination of lysine, as well as serine and threonine residues present in the cytoplasmic tail of surface class I molecules. Promotes ubiquitination of hydroxylated serine or threonine residues via ester bonds instead of the classical isopeptide linkage. In Murid herpesvirus 4 (MuHV-4), this protein is E3 ubiquitin-protein ligase MIR1 (K3).